A 428-amino-acid chain; its full sequence is Enolase (428 aa).

Position 167 (Gln167) interacts with (2R)-2-phosphoglycerate. The Proton donor role is filled by Glu209. Positions 246, 289, and 316 each coordinate Mg(2+). 4 residues coordinate (2R)-2-phosphoglycerate: Lys341, Arg370, Ser371, and Lys392. Residue Lys341 is the Proton acceptor of the active site.

The protein belongs to the enolase family. Component of the RNA degradosome, a multiprotein complex involved in RNA processing and mRNA degradation. Mg(2+) is required as a cofactor.

It localises to the cytoplasm. Its subcellular location is the secreted. It is found in the cell surface. It carries out the reaction (2R)-2-phosphoglycerate = phosphoenolpyruvate + H2O. It functions in the pathway carbohydrate degradation; glycolysis; pyruvate from D-glyceraldehyde 3-phosphate: step 4/5. Functionally, catalyzes the reversible conversion of 2-phosphoglycerate (2-PG) into phosphoenolpyruvate (PEP). It is essential for the degradation of carbohydrates via glycolysis. This Saccharophagus degradans (strain 2-40 / ATCC 43961 / DSM 17024) protein is Enolase.